The following is a 30-amino-acid chain: Cytochrome b6-f complex subunit 8 (30 aa).

Residues 4–24 (IISLGWGSLLAIFSFSIALVV) form a helical membrane-spanning segment.

It belongs to the PetN family. In terms of assembly, the 4 large subunits of the cytochrome b6-f complex are cytochrome b6, subunit IV (17 kDa polypeptide, PetD), cytochrome f and the Rieske protein, while the 4 small subunits are PetG, PetL, PetM and PetN. The complex functions as a dimer.

The protein localises to the plastid. The protein resides in the chloroplast thylakoid membrane. Its function is as follows. Component of the cytochrome b6-f complex, which mediates electron transfer between photosystem II (PSII) and photosystem I (PSI), cyclic electron flow around PSI, and state transitions. This is Cytochrome b6-f complex subunit 8 from Gracilaria tenuistipitata var. liui (Red alga).